The following is a 2194-amino-acid chain: Genome polyprotein (2194 aa).

Gly2 carries the N-myristoyl glycine; by host lipid modification. The Cytoplasmic portion of the chain corresponds to 2–1504; it reads GAQVSTQKTG…HVSRAFICLQ (1503 aa). An amphipathic alpha-helix region spans residues 566–582; sequence LYQNDPEGALNKAVGRV. Catalysis depends on for protease 2A activity residues His881 and Asp899. Residues Cys916 and Cys918 each contribute to the Zn(2+) site. The For protease 2A activity role is filled by Cys970. Positions 976 and 978 each coordinate Zn(2+). The interval 1110-1182 is membrane-binding; the sequence is NNNWLKKFTE…EQSAPSQSDQ (73 aa). The segment at 1110–1248 is oligomerization; it reads NNNWLKKFTE…SPGAGKSVAT (139 aa). The RNA-binding stretch occupies residues 1131–1135; sequence AIKIQ. The 157-residue stretch at 1214–1370 folds into the SF3 helicase domain; it reads EKKMSNYIQF…SMYSQNGKIN (157 aa). Positions 1378, 1390, and 1395 each coordinate Zn(2+). The C4-type; degenerate zinc-finger motif lies at 1378–1395; sequence CDEECCPVNFKRCCPLVC. Residues 1422-1429 form an RNA-binding region; sequence EYNHRHSV. Residues 1433 to 1438 are oligomerization; the sequence is LEALFQ. The stretch at 1505–1520 is an intramembrane region; sequence ALTTFVSVAGIIYIIY. Topologically, residues 1521–2194 are cytoplasmic; the sequence is KLFAGFQGAY…TLRRKWLDSF (674 aa). Residue Tyr1530 is modified to O-(5'-phospho-RNA)-tyrosine. One can recognise a Peptidase C3 domain in the interval 1550–1728; it reads GPAFEFAVAM…FSAALLRHYF (179 aa). Catalysis depends on for protease 3C activity residues His1589, Glu1620, and Cys1696. In terms of domain architecture, RdRp catalytic spans 1959–2075; it reads GHLIAFDYSG…SYPHPIDASL (117 aa). Residues Asp1965 and Asp2061 each coordinate Mg(2+).

Belongs to the picornaviruses polyprotein family. Interacts with capsid protein VP1 and capsid protein VP3 to form heterotrimeric protomers. As to quaternary structure, interacts with capsid protein VP0, and capsid protein VP3 to form heterotrimeric protomers. Five protomers subsequently associate to form pentamers which serve as building blocks for the capsid. Interacts with capsid protein VP2, capsid protein VP3 and capsid protein VP4 following cleavage of capsid protein VP0. In terms of assembly, interacts with capsid protein VP1 and capsid protein VP3 in the mature capsid. Interacts with capsid protein VP0 and capsid protein VP1 to form heterotrimeric protomers. Five protomers subsequently associate to form pentamers which serve as building blocks for the capsid. Interacts with capsid protein VP4 in the mature capsid. Interacts with protein 2C; this interaction may be important for virion morphogenesis. As to quaternary structure, interacts with capsid protein VP1 and capsid protein VP3. In terms of assembly, homodimer. Homohexamer; forms a hexameric ring structure with 6-fold symmetry characteristic of AAA+ ATPases. Interacts (via N-terminus) with host RTN3 (via reticulon domain); this interaction is important for viral replication. Interacts with capsid protein VP3; this interaction may be important for virion morphogenesis. As to quaternary structure, interacts with protein 3CD. In terms of assembly, homodimer. Interacts with host GBF1. Interacts (via GOLD domain) with host ACBD3 (via GOLD domain); this interaction allows the formation of a viral protein 3A/ACBD3 heterotetramer with a 2:2 stoichiometry, which will stimulate the recruitment of host PI4KB in order to synthesize PI4P at the viral RNA replication sites. Interacts with RNA-directed RNA polymerase. As to quaternary structure, interacts with protein 3AB and with RNA-directed RNA polymerase. In terms of assembly, interacts with Viral protein genome-linked and with protein 3CD. Requires Mg(2+) as cofactor. Post-translationally, specific enzymatic cleavages in vivo by the viral proteases yield processing intermediates and the mature proteins. In terms of processing, myristoylation is required for the formation of pentamers during virus assembly. Further assembly of 12 pentamers and a molecule of genomic RNA generates the provirion. During virion maturation, immature virions are rendered infectious following cleavage of VP0 into VP4 and VP2. This maturation seems to be an autocatalytic event triggered by the presence of RNA in the capsid and it is followed by a conformational change infectious virion. Post-translationally, myristoylation is required during RNA encapsidation and formation of the mature virus particle. In terms of processing, VPg is uridylylated by the polymerase into VPg-pUpU. This acts as a nucleotide-peptide primer for the genomic RNA replication.

Its subcellular location is the virion. The protein localises to the host cytoplasm. The protein resides in the host cytoplasmic vesicle membrane. It is found in the host nucleus. It catalyses the reaction a ribonucleoside 5'-triphosphate + H2O = a ribonucleoside 5'-diphosphate + phosphate + H(+). It carries out the reaction Selective cleavage of Tyr-|-Gly bond in the picornavirus polyprotein.. The enzyme catalyses RNA(n) + a ribonucleoside 5'-triphosphate = RNA(n+1) + diphosphate. The catalysed reaction is Selective cleavage of Gln-|-Gly bond in the poliovirus polyprotein. In other picornavirus reactions Glu may be substituted for Gln, and Ser or Thr for Gly.. Replication or transcription is subject to high level of random mutations by the nucleotide analog ribavirin. Its function is as follows. Forms an icosahedral capsid of pseudo T=3 symmetry with capsid proteins VP2 and VP3. The capsid is 300 Angstroms in diameter, composed of 60 copies of each capsid protein and enclosing the viral positive strand RNA genome. Capsid protein VP1 mainly forms the vertices of the capsid. Capsid protein VP1 interacts with host cell receptor to provide virion attachment to target host cells. This attachment induces virion internalization. Tyrosine kinases are probably involved in the entry process. After binding to its receptor, the capsid undergoes conformational changes. Capsid protein VP1 N-terminus (that contains an amphipathic alpha-helix) and capsid protein VP4 are externalized. Together, they shape a pore in the host membrane through which viral genome is translocated to host cell cytoplasm. In terms of biological role, forms an icosahedral capsid of pseudo T=3 symmetry with capsid proteins VP2 and VP3. The capsid is 300 Angstroms in diameter, composed of 60 copies of each capsid protein and enclosing the viral positive strand RNA genome. Functionally, lies on the inner surface of the capsid shell. After binding to the host receptor, the capsid undergoes conformational changes. Capsid protein VP4 is released, Capsid protein VP1 N-terminus is externalized, and together, they shape a pore in the host membrane through which the viral genome is translocated into the host cell cytoplasm. Component of immature procapsids, which is cleaved into capsid proteins VP4 and VP2 after maturation. Allows the capsid to remain inactive before the maturation step. Its function is as follows. Cysteine protease that cleaves viral polyprotein and specific host proteins. It is responsible for the autocatalytic cleavage between the P1 and P2 regions, which is the first cleavage occurring in the polyprotein. Also cleaves the host translation initiation factor EIF4G1, in order to shut down the capped cellular mRNA translation. Inhibits the host nucleus-cytoplasm protein and RNA trafficking by cleaving host members of the nuclear pores. Counteracts stress granule formation probably by antagonizing its assembly or promoting its dissassembly. In terms of biological role, plays an essential role in the virus replication cycle by acting as a viroporin. Creates a pore in the host endoplasmic reticulum and as a consequence releases Ca2+ in the cytoplasm of infected cell. In turn, high levels of cytoplasmic calcium may trigger membrane trafficking and transport of viral ER-associated proteins to viroplasms, sites of viral genome replication. Functionally, induces and associates with structural rearrangements of intracellular membranes. Displays RNA-binding, nucleotide binding and NTPase activities. May play a role in virion morphogenesis and viral RNA encapsidation by interacting with the capsid protein VP3. Localizes the viral replication complex to the surface of membranous vesicles. Together with protein 3CD binds the Cis-Active RNA Element (CRE) which is involved in RNA synthesis initiation. Acts as a cofactor to stimulate the activity of 3D polymerase, maybe through a nucleid acid chaperone activity. Its function is as follows. Localizes the viral replication complex to the surface of membranous vesicles. It inhibits host cell endoplasmic reticulum-to-Golgi apparatus transport and causes the disassembly of the Golgi complex, possibly through GBF1 interaction. This would result in depletion of MHC, trail receptors and IFN receptors at the host cell surface. Plays an essential role in viral RNA replication by recruiting ACBD3 and PI4KB at the viral replication sites, thereby allowing the formation of the rearranged membranous structures where viral replication takes place. In terms of biological role, acts as a primer for viral RNA replication and remains covalently bound to viral genomic RNA. VPg is uridylylated prior to priming replication into VPg-pUpU. The oriI viral genomic sequence may act as a template for this. The VPg-pUpU is then used as primer on the genomic RNA poly(A) by the RNA-dependent RNA polymerase to replicate the viral genome. During genome replication, the VPg-RNA linkage is removed by the host TDP2, thereby accelerating replication. During the late stage of the replication cycle, host TDP2 is excluded from sites of viral RNA synthesis and encapsidation, allowing for the generation of progeny virions. Functionally, involved in the viral replication complex and viral polypeptide maturation. It exhibits protease activity with a specificity and catalytic efficiency that is different from protease 3C. Protein 3CD lacks polymerase activity. Protein 3CD binds to the 5'UTR of the viral genome. Replicates the viral genomic RNA on the surface of intracellular membranes. May form linear arrays of subunits that propagate along a strong head-to-tail interaction called interface-I. Covalently attaches UMP to a tyrosine of VPg, which is used to prime RNA synthesis. The positive stranded RNA genome is first replicated at virus induced membranous vesicles, creating a dsRNA genomic replication form. This dsRNA is then used as template to synthesize positive stranded RNA genomes. ss(+)RNA genomes are either translated, replicated or encapsidated. Its function is as follows. Major viral protease that mediates proteolytic processing of the polyprotein. Cleaves host EIF5B, contributing to host translation shutoff. Also cleaves host PABPC1, contributing to host translation shutoff. Cleaves host NLRP1, triggers host N-glycine-mediated degradation of the autoinhibitory NLRP1 N-terminal fragment. The polypeptide is Genome polyprotein (Homo sapiens (Human)).